The following is a 220-amino-acid chain: Large ribosomal subunit protein uL1 (220 aa).

This sequence belongs to the universal ribosomal protein uL1 family. As to quaternary structure, part of the 50S ribosomal subunit.

In terms of biological role, binds directly to 23S rRNA. The L1 stalk is quite mobile in the ribosome, and is involved in E site tRNA release. Protein L1 is also a translational repressor protein, it controls the translation of the L11 operon by binding to its mRNA. The sequence is that of Large ribosomal subunit protein uL1 from Ehrlichia canis (strain Jake).